A 781-amino-acid polypeptide reads, in one-letter code: DNA translocase FtsK 2 (781 aa).

Helical transmembrane passes span 24–44, 74–94, 120–140, and 170–190; these read LLGE…LTIL, FADV…LLLL, AGVT…LEAI, and GFTG…SLFF. The Cytoplasmic segment spans residues 191-781; that stretch reads HFSWLNLAEQ…NRNGNVVEEE (591 aa). Positions 414 to 623 constitute a FtsK domain; sequence GKPVVADLAK…FQVSSKIDSR (210 aa). 434–439 serves as a coordination point for ATP; it reads GSGKSV.

It belongs to the FtsK/SpoIIIE/SftA family. Homohexamer. Forms a ring that surrounds DNA.

It is found in the cell inner membrane. In terms of biological role, essential cell division protein that coordinates cell division and chromosome segregation. The N-terminus is involved in assembly of the cell-division machinery. The C-terminus functions as a DNA motor that moves dsDNA in an ATP-dependent manner towards the dif recombination site, which is located within the replication terminus region. Translocation stops specifically at Xer-dif sites, where FtsK interacts with the Xer recombinase, allowing activation of chromosome unlinking by recombination. FtsK orienting polar sequences (KOPS) guide the direction of DNA translocation. FtsK can remove proteins from DNA as it translocates, but translocation stops specifically at XerCD-dif site, thereby preventing removal of XerC and XerD from dif. The sequence is that of DNA translocase FtsK 2 (ftsK2) from Ralstonia nicotianae (strain ATCC BAA-1114 / GMI1000) (Ralstonia solanacearum).